Here is a 288-residue protein sequence, read N- to C-terminus: DegV domain-containing protein SAS0714 (288 aa).

Positions 3 to 282 constitute a DegV domain; sequence IAVMTDSTSY…SGGLGLGYVG (280 aa). Residues Thr-62 and Ser-95 each coordinate hexadecanoate.

In terms of biological role, may bind long-chain fatty acids, such as palmitate, and may play a role in lipid transport or fatty acid metabolism. This Staphylococcus aureus (strain MSSA476) protein is DegV domain-containing protein SAS0714.